Reading from the N-terminus, the 181-residue chain is Ion-translocating oxidoreductase complex subunit B (181 aa).

The tract at residues M1 to A26 is hydrophobic. Residues E32–V90 enclose the 4Fe-4S domain. 12 residues coordinate [4Fe-4S] cluster: C49, C52, C57, C73, C110, C113, C116, C120, C140, C143, C146, and C150. 4Fe-4S ferredoxin-type domains follow at residues K101–K130 and Q131–V160.

Belongs to the 4Fe4S bacterial-type ferredoxin family. RnfB subfamily. In terms of assembly, the complex is composed of six subunits: RnfA, RnfB, RnfC, RnfD, RnfE and RnfG. Requires [4Fe-4S] cluster as cofactor.

The protein resides in the cell inner membrane. Functionally, part of a membrane-bound complex that couples electron transfer with translocation of ions across the membrane. The protein is Ion-translocating oxidoreductase complex subunit B of Magnetococcus marinus (strain ATCC BAA-1437 / JCM 17883 / MC-1).